The sequence spans 228 residues: Prolactin (228 aa).

Positions 1 to 29 (MCTKRSSLKGSLLLLLLISSLLLSRSVDS) are cleaved as a signal peptide. Cysteines 33 and 40 form a disulfide. Serine 55, serine 63, and serine 119 each carry phosphoserine. Disulfide bonds link cysteine 87–cysteine 203 and cysteine 220–cysteine 228.

This sequence belongs to the somatotropin/prolactin family. Interacts with PRLR.

Its subcellular location is the secreted. Prolactin acts primarily on the mammary gland by promoting lactation. In Isoodon macrourus (Short-nosed bandicoot), this protein is Prolactin (PRL).